Reading from the N-terminus, the 285-residue chain is uncharacterized protein (285 aa).

2 disordered regions span residues 115-139 (AAGKASVQARRSRKEADVQTKQERN) and 152-183 (EHDVNTKATNKDTDKDLKTDPPLNPPRGNRGV). 2 stretches are compositionally biased toward basic and acidic residues: residues 128–138 (KEADVQTKQER) and 152–170 (EHDVNTKATNKDTDKDLKT).

This is an uncharacterized protein from Escherichia coli (strain K12).